We begin with the raw amino-acid sequence, 81 residues long: High-potential iron-sulfur protein (81 aa).

Cys43, Cys46, Cys59, and Cys73 together coordinate [4Fe-4S] cluster.

Belongs to the high-potential iron-sulfur protein (HiPIP) family. In terms of assembly, homodimer.

In terms of biological role, specific class of high-redox-potential 4Fe-4S ferredoxins. Functions in anaerobic electron transport in most purple and in some other photosynthetic bacteria and in at least one genus (Paracoccus) of halophilic, denitrifying bacteria. This chain is High-potential iron-sulfur protein (hip), found in Thiococcus pfennigii (Thiocapsa pfennigii).